Here is a 370-residue protein sequence, read N- to C-terminus: Chaperone protein DnaJ (370 aa).

A J domain is found at 6 to 70; that stretch reads DFYEILGVSK…QKRANYDQFG (65 aa). The CR-type zinc-finger motif lies at 134-216; it reads GANKSVTLNV…CHGKGFNTKR (83 aa). Zn(2+) contacts are provided by Cys-147, Cys-150, Cys-164, Cys-167, Cys-190, Cys-193, Cys-204, and Cys-207. CXXCXGXG motif repeat units lie at residues 147–154, 164–171, 190–197, and 204–211; these read CTSCHGSG, CSRCGGTG, CPDCGGSG, and CGECHGKG.

The protein belongs to the DnaJ family. Homodimer. Zn(2+) is required as a cofactor.

The protein localises to the cytoplasm. Participates actively in the response to hyperosmotic and heat shock by preventing the aggregation of stress-denatured proteins and by disaggregating proteins, also in an autonomous, DnaK-independent fashion. Unfolded proteins bind initially to DnaJ; upon interaction with the DnaJ-bound protein, DnaK hydrolyzes its bound ATP, resulting in the formation of a stable complex. GrpE releases ADP from DnaK; ATP binding to DnaK triggers the release of the substrate protein, thus completing the reaction cycle. Several rounds of ATP-dependent interactions between DnaJ, DnaK and GrpE are required for fully efficient folding. Also involved, together with DnaK and GrpE, in the DNA replication of plasmids through activation of initiation proteins. This is Chaperone protein DnaJ from Erysipelothrix rhusiopathiae.